The primary structure comprises 34 residues: MSDIN-like toxin proprotein 7 (34 aa).

A propeptide spanning residues 1–10 (MSDINATRLP) is cleaved from the precursor. A cross-link (cyclopeptide (Ala-Pro)) is located at residues 11 to 17 (AWLTDCP). The propeptide occupies 18 to 34 (CVGDDVNRLLTRGESLC).

The protein belongs to the MSDIN fungal toxin family. Processed by the macrocyclase-peptidase enzyme POPB to yield a toxic cyclic heptapeptide. POPB first removes 10 residues from the N-terminus. Conformational trapping of the remaining peptide forces the enzyme to release this intermediate rather than proceed to macrocyclization. The enzyme rebinds the remaining peptide in a different conformation and catalyzes macrocyclization of the N-terminal 7 residues. Expressed in basidiocarps.

Probable toxin that belongs to the MSDIN-like toxin family responsible for a large number of food poisoning cases and deaths. This Amanita exitialis (Guangzhou destroying angel) protein is MSDIN-like toxin proprotein 7.